The chain runs to 81 residues: U6-theraphotoxin-Hs1a (81 aa).

A signal peptide spans 1–21 (MKASMFLALAGLVLLFVVCYA). The propeptide occupies 22 to 48 (SESEEKEFPRELLSTIFAVDDFKGEER). Cystine bridges form between Cys50-Cys65 and Cys57-Cys70.

This sequence belongs to the neurotoxin 10 (Hwtx-1) family. 51 (Hntx-8) subfamily. In terms of tissue distribution, expressed by the venom gland.

It is found in the secreted. Its function is as follows. Binds to the nicotinic acetylcholine receptor. Blocks neuromuscular transmission. The protein is U6-theraphotoxin-Hs1a of Cyriopagopus schmidti (Chinese bird spider).